The sequence spans 239 residues: SkfA peptide export ATP-binding protein SkfE (239 aa).

Residues 4-232 (MQVQNLSKCY…AEWRKEVIRL (229 aa)) form the ABC transporter domain. 36-43 (GPNGAGKT) lines the ATP pocket.

Belongs to the ABC transporter superfamily. SkfA peptide export (TC 3.A.1.128.1) family.

It is found in the cell membrane. It catalyses the reaction sulfate(out) + ATP + H2O = sulfate(in) + ADP + phosphate + H(+). It carries out the reaction thiosulfate(out) + ATP + H2O = thiosulfate(in) + ADP + phosphate + H(+). Functionally, probably part of the ABC transporter SkfEF involved in the export of the bacteriocin SKF. Probably responsible for energy coupling to the transport system. In Bacillus subtilis (strain 168), this protein is SkfA peptide export ATP-binding protein SkfE.